The sequence spans 533 residues: Zona pellucida sperm-binding protein 3 receptor (533 aa).

The signal sequence occupies residues 1 to 28; that stretch reads MFPRLQAVSAPALLQITLMAVLLAPVLG. Sushi domains are found at residues 29–88, 89–150, 151–215, 216–275, 276–342, 343–408, and 409–467; these read DCGP…FCAK, KRCR…ECVI, VKCD…TCEK, VICR…TCEP, NGCI…GCER, VCCP…ACES, and AVCL…KCEW. Disulfide bonds link Cys30–Cys74, Cys60–Cys86, Cys91–Cys132, Cys118–Cys148, Cys153–Cys196, Cys182–Cys213, Cys218–Cys260, Cys246–Cys273, Cys278–Cys328, Cys312–Cys340, Cys345–Cys393, Cys378–Cys406, Cys411–Cys452, and Cys438–Cys465. Residues Asn68 and Asn77 are each glycosylated (N-linked (GlcNAc...) asparagine). N-linked (GlcNAc...) asparagine glycosylation is found at Asn185, Asn191, and Asn200. N-linked (GlcNAc...) asparagine glycosylation is found at Asn433 and Asn455.

As to quaternary structure, homooligomer; disulfide-linked. May contain 6-8 monomers per oligomer. The N-terminus may be blocked. Testis. Not expressed in heart, brain, liver or kidney.

The protein resides in the cytoplasmic vesicle. The protein localises to the secretory vesicle. It localises to the acrosome lumen. Probably involved in the formation of the dense core and M1 domain of the acrosome. May also regulate the release of certain secretory proteins following the acrosomal reaction. The chain is Zona pellucida sperm-binding protein 3 receptor (ZP3R) from Cavia porcellus (Guinea pig).